The primary structure comprises 59 residues: Large ribosomal subunit protein uL30 (59 aa).

The protein belongs to the universal ribosomal protein uL30 family. As to quaternary structure, part of the 50S ribosomal subunit.

This chain is Large ribosomal subunit protein uL30, found in Mycobacterium sp. (strain JLS).